The primary structure comprises 300 residues: GTPase Era (300 aa).

The Era-type G domain occupies lysine 4–glutamate 172. Positions glycine 12–serine 19 are G1. Glycine 12–serine 19 is a GTP binding site. The segment at glutamine 38–asparagine 42 is G2. The G3 stretch occupies residues aspartate 59 to glycine 62. GTP is bound by residues aspartate 59–isoleucine 63 and asparagine 121–aspartate 124. Residues asparagine 121–aspartate 124 are G4. The interval isoleucine 151–alanine 153 is G5. Positions isoleucine 195–glutamate 280 constitute a KH type-2 domain.

It belongs to the TRAFAC class TrmE-Era-EngA-EngB-Septin-like GTPase superfamily. Era GTPase family. In terms of assembly, monomer.

The protein localises to the cytoplasm. Its subcellular location is the cell inner membrane. Its function is as follows. An essential GTPase that binds both GDP and GTP, with rapid nucleotide exchange. Plays a role in 16S rRNA processing and 30S ribosomal subunit biogenesis and possibly also in cell cycle regulation and energy metabolism. In Thermotoga maritima (strain ATCC 43589 / DSM 3109 / JCM 10099 / NBRC 100826 / MSB8), this protein is GTPase Era.